Consider the following 332-residue polypeptide: MALLCYNRGCGQRFDPETNSDDACTYHPGVPVFHDALKGWSCCKRRTTDFSDFLSIAGCTKGRHNSEKPPEPVKPEVKTTEKKELSELKPRFQEHIIQAPKPVEAIKRPSPDEPMTNLELKISASLKQALDKLKLSSGNEENKKEEDSDEIKVGTSCKNGGCSKTYQGPQSLEEVCVYHSGVPIFHEGMKYWSCCRRKTSDFNTFLAQEGCTTGKHTWTKKDAGKKVVPCRHDWHQTGGEVTISVYAKNSLPELSQVVANSTLLNVHIVFEGEKEFHQNVKLWGVIDVKRSYVTMTATKIEITMRKAEPMQWASLELPAAKNQEKQKEDTAE.

A2 bears the N-acetylalanine mark. Residues A2–V77 form an interaction with PPP5C region. The Zn(2+) site is built by C5, C10, C24, H27, C42, and C43. 2 CHORD domains span residues C5–H64 and C157–H216. T47 is subject to Phosphothreonine. Phosphoserine is present on S51. 10 residues coordinate Zn(2+): C59, H64, C157, C162, C176, H179, C194, C195, C211, and H216. The tract at residues K61–K82 is disordered. Basic and acidic residues predominate over residues H64–K82. The interaction with HSP90AA1 and HSP90AB1 stretch occupies residues N65–E316. The 90-residue stretch at V227–E316 folds into the CS domain.

Interacts with HSP90AA1, HSP90AB1, PPP5C, ROCK1 and ROCK2.

Its function is as follows. Regulates centrosome duplication, probably by inhibiting the kinase activity of ROCK2. Proposed to act as co-chaperone for HSP90. May play a role in the regulation of NOD1 via a HSP90 chaperone complex. In vitro, has intrinsic chaperone activity. This function may be achieved by inhibiting association of ROCK2 with NPM1. Plays a role in ensuring the localization of the tyrosine kinase receptor EGFR to the plasma membrane, and thus ensures the subsequent regulation of EGFR activity and EGF-induced actin cytoskeleton remodeling. Involved in stress response. Prevents tumorigenesis. The sequence is that of Cysteine and histidine-rich domain-containing protein 1 (CHORDC1) from Sus scrofa (Pig).